The chain runs to 470 residues: ATP synthase subunit beta (470 aa).

An ATP-binding site is contributed by glycine 148 to threonine 155.

The protein belongs to the ATPase alpha/beta chains family. In terms of assembly, F-type ATPases have 2 components, CF(1) - the catalytic core - and CF(0) - the membrane proton channel. CF(1) has five subunits: alpha(3), beta(3), gamma(1), delta(1), epsilon(1). CF(0) has three main subunits: a(1), b(2) and c(9-12). The alpha and beta chains form an alternating ring which encloses part of the gamma chain. CF(1) is attached to CF(0) by a central stalk formed by the gamma and epsilon chains, while a peripheral stalk is formed by the delta and b chains.

It is found in the cell inner membrane. It carries out the reaction ATP + H2O + 4 H(+)(in) = ADP + phosphate + 5 H(+)(out). Functionally, produces ATP from ADP in the presence of a proton gradient across the membrane. The catalytic sites are hosted primarily by the beta subunits. This chain is ATP synthase subunit beta, found in Saccharophagus degradans (strain 2-40 / ATCC 43961 / DSM 17024).